A 422-amino-acid polypeptide reads, in one-letter code: MDVLSPGQGNNTTSPPAPFETGGNTTGISDVTVSYQVITSLLLGTLIFCAVLGNACVVAAIALERSLQNVANYLIGSLAVTDLMVSVLVLPMAALYQVLNKWTLGQVTCDLFIALDVLCCTSSILHLCAIALDRYWAITDPIDYVNKRTPRRAAALISLTWLIGFLISIPPMLGWRTPEDRSDPDACTISKDHGYTIYSTFGAFYIPLLLMLVLYGRIFRAARFRIRKTVKKVEKTGADTRHGASPAPQPKKSVNGESGSRNWRLGVESKAGGALCANGAVRQGDDGAALEVIEVHRVGNSKEHLPLPSEAGPTPCAPASFERKNERNAEAKRKMALARERKTVKTLGIIMGTFILCWLPFFIVALVLPFCESSCHMPTLLGAIINWLGYSNSLLNPVIYAYFNKDFQNAFKKIIKCKFCRQ.

The segment at 1-23 (MDVLSPGQGNNTTSPPAPFETGG) is disordered. Residues 1-38 (MDVLSPGQGNNTTSPPAPFETGGNTTGISDVTVSYQVI) lie on the Extracellular side of the membrane. N-linked (GlcNAc...) asparagine glycans are attached at residues asparagine 10, asparagine 11, and asparagine 24. A helical transmembrane segment spans residues 39-59 (TSLLLGTLIFCAVLGNACVVA). Residues 60 to 73 (AIALERSLQNVANY) lie on the Cytoplasmic side of the membrane. The helical transmembrane segment at 74–98 (LIGSLAVTDLMVSVLVLPMAALYQV) threads the bilayer. Topologically, residues 99-107 (LNKWTLGQV) are extracellular. Residues 108-132 (TCDLFIALDVLCCTSSILHLCAIAL) traverse the membrane as a helical segment. A disulfide bridge links cysteine 109 with cysteine 187. Positions 116 and 120 each coordinate serotonin. The short motif at 133–135 (DRY) is the DRY motif; important for ligand-induced conformation changes element. At 133–152 (DRYWAITDPIDYVNKRTPRR) the chain is on the cytoplasmic side. Residues 153–174 (AAALISLTWLIGFLISIPPMLG) traverse the membrane as a helical segment. Residues 175–193 (WRTPEDRSDPDACTISKDH) are Extracellular-facing. The chain crosses the membrane as a helical span at residues 194 to 216 (GYTIYSTFGAFYIPLLLMLVLYG). At 217-346 (RIFRAARFRI…LARERKTVKT (130 aa)) the chain is on the cytoplasmic side. The interval 235–262 (KTGADTRHGASPAPQPKKSVNGESGSRN) is disordered. Residues threonine 314, lysine 345, threonine 346, and glycine 352 each coordinate 1D-myo-inositol 4-phosphate. A helical membrane pass occupies residues 347 to 370 (LGIIMGTFILCWLPFFIVALVLPF). At 371-378 (CESSCHMP) the chain is on the extracellular side. A helical membrane pass occupies residues 379–403 (TLLGAIINWLGYSNSLLNPVIYAYF). The NPxxY motif; important for ligand-induced conformation changes and signaling motif lies at 396–400 (NPVIY). Phenylalanine 403, asparagine 404, and lysine 405 together coordinate 1D-myo-inositol 4-phosphate. Topologically, residues 404-422 (NKDFQNAFKKIIKCKFCRQ) are cytoplasmic.

It belongs to the G-protein coupled receptor 1 family. 5-hydroxytryptamine receptor subfamily. HTR1A sub-subfamily. In terms of assembly, heterodimer; heterodimerizes with GPER1. Interacts with YIF1B. Interacts with GPR39 and GALR1. Detected in lymph nodes, thymus and spleen. Detected in activated T-cells, but not in resting T-cells.

The protein localises to the cell membrane. It localises to the cell projection. Its subcellular location is the dendrite. G-protein coupled receptor activity is regulated by lipids: phosphatidylinositol 4-phosphate increases HTR1A-mediated activity. Binding to aripiprazol drug is regulated by cholesterol, which shapes the ligand-binding pocket, determining the specificity for aripiprazol. Activated by IHCH-7179 small molecule: IHCH-7179 acts both as an agonist activator for HTR1A and as an antagonist inhibitor for HTR2A. Activated by SEP-363856 small molecule: IHCH-7179 acts both as an agonist activator for HTR1A and TAAR1. In terms of biological role, G-protein coupled receptor for 5-hydroxytryptamine (serotonin). Also functions as a receptor for various drugs and psychoactive substances. Ligand binding causes a conformation change that triggers signaling via guanine nucleotide-binding proteins (G proteins) and modulates the activity of downstream effectors, such as adenylate cyclase. HTR1A is coupled to G(i)/G(o) G alpha proteins and mediates inhibitory neurotransmission: signaling inhibits adenylate cyclase activity and activates a phosphatidylinositol-calcium second messenger system that regulates the release of Ca(2+) ions from intracellular stores. Beta-arrestin family members regulate signaling by mediating both receptor desensitization and resensitization processes. Plays a role in the regulation of 5-hydroxytryptamine release and in the regulation of dopamine and 5-hydroxytryptamine metabolism. Plays a role in the regulation of dopamine and 5-hydroxytryptamine levels in the brain, and thereby affects neural activity, mood and behavior. Plays a role in the response to anxiogenic stimuli. The chain is 5-hydroxytryptamine receptor 1A from Homo sapiens (Human).